The chain runs to 37 residues: Large ribosomal subunit protein bL36 (37 aa).

The protein belongs to the bacterial ribosomal protein bL36 family.

This Paracidovorax citrulli (strain AAC00-1) (Acidovorax citrulli) protein is Large ribosomal subunit protein bL36.